The sequence spans 165 residues: Ribosome maturation factor RimM (165 aa).

A PRC barrel domain is found at 94 to 165 (EDEFYIADLT…YVILNYQREA (72 aa)).

The protein belongs to the RimM family. As to quaternary structure, binds ribosomal protein uS19.

It is found in the cytoplasm. In terms of biological role, an accessory protein needed during the final step in the assembly of 30S ribosomal subunit, possibly for assembly of the head region. Essential for efficient processing of 16S rRNA. May be needed both before and after RbfA during the maturation of 16S rRNA. It has affinity for free ribosomal 30S subunits but not for 70S ribosomes. This chain is Ribosome maturation factor RimM, found in Rickettsia rickettsii (strain Iowa).